Reading from the N-terminus, the 260-residue chain is Thiazole synthase (260 aa).

The Schiff-base intermediate with DXP role is filled by Lys96. 1-deoxy-D-xylulose 5-phosphate contacts are provided by residues Gly157, Ala184 to Gly185, and Asn206 to Thr207.

The protein belongs to the ThiG family. Homotetramer. Forms heterodimers with either ThiH or ThiS.

Its subcellular location is the cytoplasm. It catalyses the reaction [ThiS sulfur-carrier protein]-C-terminal-Gly-aminoethanethioate + 2-iminoacetate + 1-deoxy-D-xylulose 5-phosphate = [ThiS sulfur-carrier protein]-C-terminal Gly-Gly + 2-[(2R,5Z)-2-carboxy-4-methylthiazol-5(2H)-ylidene]ethyl phosphate + 2 H2O + H(+). It participates in cofactor biosynthesis; thiamine diphosphate biosynthesis. Catalyzes the rearrangement of 1-deoxy-D-xylulose 5-phosphate (DXP) to produce the thiazole phosphate moiety of thiamine. Sulfur is provided by the thiocarboxylate moiety of the carrier protein ThiS. In vitro, sulfur can be provided by H(2)S. The protein is Thiazole synthase of Bradyrhizobium sp. (strain ORS 278).